Here is a 325-residue protein sequence, read N- to C-terminus: Hydroxymethylglutaryl-CoA lyase, mitochondrial (325 aa).

The transit peptide at 1–27 directs the protein to the mitochondrion; the sequence is MATVRKAFPQRLVGLASLRAASTSSMG. A Pyruvate carboxyltransferase domain is found at 33–300; the sequence is VKIVEVGPRD…HTGVNLQKLL (268 aa). Position 41 (Arg-41) interacts with substrate. Asp-42 is an a divalent metal cation binding site. Lys-48 is modified (N6-acetyllysine; alternate). The residue at position 48 (Lys-48) is an N6-succinyllysine; alternate. At Lys-111 the chain carries N6-acetyllysine. An N6-acetyllysine; alternate mark is found at Lys-137 and Lys-179. An N6-succinyllysine; alternate mark is found at Lys-137 and Lys-179. Positions 233 and 235 each coordinate a divalent metal cation. Cys-266 is a catalytic residue. Asn-275 contributes to the a divalent metal cation binding site. Residues 323 to 325 carry the Microbody targeting signal motif; it reads CKL. The residue at position 324 (Lys-324) is an N6-acetyllysine.

The protein belongs to the HMG-CoA lyase family. In terms of assembly, homodimer; disulfide-linked. Can also form homotetramers. As to expression, in suckling rat, highest levels in liver and in intestine. Lower levels in heart, kidney and cerebellum. Weak expression in brain cortex, medulla and midbrain. Levels decrease slightly during weaning.

It is found in the mitochondrion matrix. The protein localises to the peroxisome. The enzyme catalyses (3S)-3-hydroxy-3-methylglutaryl-CoA = acetoacetate + acetyl-CoA. Its pathway is metabolic intermediate metabolism; (S)-3-hydroxy-3-methylglutaryl-CoA degradation; acetoacetate from (S)-3-hydroxy-3-methylglutaryl-CoA: step 1/1. Mitochondrial 3-hydroxy-3-methylglutaryl-CoA lyase that catalyzes a cation-dependent cleavage of (S)-3-hydroxy-3-methylglutaryl-CoA into acetyl-CoA and acetoacetate, a key step in ketogenesis. Terminal step in leucine catabolism. Ketone bodies (beta-hydroxybutyrate, acetoacetate and acetone) are essential as an alternative source of energy to glucose, as lipid precursors and as regulators of metabolism. The chain is Hydroxymethylglutaryl-CoA lyase, mitochondrial (Hmgcl) from Rattus norvegicus (Rat).